A 267-amino-acid chain; its full sequence is O-methyltransferase (267 aa).

Positions 100 and 145 each coordinate S-adenosyl-L-methionine.

Belongs to the methyltransferase superfamily.

It participates in antifungal biosynthesis. O-methyltransferase; part of the gene cluster that mediates the biosynthesis of the tetrahydropyranyl antifungal agent lanomycin that acts as an inhibitor of CYP51 and blocks the ergosterol biosynthesis. The biosynthesis probably begins with the formation of an hexaketide, followed by methionine mediated alkylation of C-2 and C-6, and methylation of the reduced C-3 oxygen, pyran forming reductive ring closure, oxygenation of C-4, beta-keto reduction, enoyl reduction and dehydration of the remaining oxygens, and finally, acylation with glycine to complete the biosynthesis. This chain is O-methyltransferase, found in Pyrenophora dematioidea (Helminthosporium dematioideum).